We begin with the raw amino-acid sequence, 367 residues long: Leucine dehydrogenase (367 aa).

Residue Lys-80 is part of the active site. 180-186 is a binding site for NAD(+); the sequence is GVGNVAY.

This sequence belongs to the Glu/Leu/Phe/Val dehydrogenases family. Homohexamer.

It catalyses the reaction L-leucine + NAD(+) + H2O = 4-methyl-2-oxopentanoate + NH4(+) + NADH + H(+). It functions in the pathway amino-acid degradation; L-leucine degradation; 4-methyl-2-oxopentanoate from L-leucine (dehydrogenase route): step 1/1. Catalyzes the reversible deamination of L-leucine to 4-methyl-2-oxopentanoate. The chain is Leucine dehydrogenase (ldh) from Geobacillus stearothermophilus (Bacillus stearothermophilus).